The following is a 227-amino-acid chain: dTTP/UTP pyrophosphatase (227 aa).

Catalysis depends on D98, which acts as the Proton acceptor.

The protein belongs to the Maf family. YhdE subfamily. A divalent metal cation is required as a cofactor.

The protein resides in the cytoplasm. It catalyses the reaction dTTP + H2O = dTMP + diphosphate + H(+). It carries out the reaction UTP + H2O = UMP + diphosphate + H(+). Functionally, nucleoside triphosphate pyrophosphatase that hydrolyzes dTTP and UTP. May have a dual role in cell division arrest and in preventing the incorporation of modified nucleotides into cellular nucleic acids. This Bartonella quintana (strain Toulouse) (Rochalimaea quintana) protein is dTTP/UTP pyrophosphatase.